A 454-amino-acid polypeptide reads, in one-letter code: Septin-10 (454 aa).

The 267-residue stretch at 63–329 (QGFCFNILCV…ELYRRCKLEE (267 aa)) folds into the Septin-type G domain. The G1 motif stretch occupies residues 73-80 (GETGIGKS). Residues 73 to 80 (GETGIGKS), G128, 209 to 217 (KADTVSKTE), G263, and R278 contribute to the GTP site. A G3 motif region spans residues 125-128 (NTVG). Positions 208–211 (AKAD) are G4 motif.

This sequence belongs to the TRAFAC class TrmE-Era-EngA-EngB-Septin-like GTPase superfamily. Septin GTPase family. Septins polymerize into heterooligomeric protein complexes that form filaments, and can associate with cellular membranes, actin filaments and microtubules. GTPase activity is required for filament formation. Interacts with ADGB. Proteolytically cleaved in vitro in a calmodulin-dependent manner. In terms of tissue distribution, widely expressed. Abundantly expressed in heart and kidney, placenta, skeletal muscles, liver and lung, as well as various tumor cell lines.

The protein resides in the cytoplasm. The protein localises to the cytoskeleton. It is found in the cell projection. Its subcellular location is the cilium. It localises to the flagellum. In terms of biological role, filament-forming cytoskeletal GTPase. May play a role in cytokinesis (Potential). This chain is Septin-10, found in Homo sapiens (Human).